A 37-amino-acid chain; its full sequence is Alpha-conotoxin TxID (37 aa).

The propeptide occupies 1 to 21 (FDGRNAAGNDKMSALMALTTR). 2 cysteine pairs are disulfide-bonded: Cys-23-Cys-29 and Cys-24-Cys-36. Cys-36 carries the cysteine amide modification.

Belongs to the conotoxin A superfamily. Unmodified Met-32 is essential for toxin binding to rat alpha-3-beta-4/CHRNA3-CHRNB4 nAChR. An oxidation of this methionine provokes a 13.3-fold decrease in inhibitory potency (IC(50)=245 nM instead of 18 nM). Owing to its potent activity, derivatives of this toxin have a potential in the development of a novel drug. Unfortunately, the oxidation of the methionine is readily to happen during toxin synthesis and oxidation steps as well as under oxidative environment in vivo, which should still be considered to find a solution to this major drawback. In terms of tissue distribution, expressed by the venom duct.

It is found in the secreted. Alpha-conotoxins act on postsynaptic membranes, they bind to the nicotinic acetylcholine receptors (nAChR) and thus inhibit them. This toxin inhibits alpha-3-beta-4/CHRNA3-CHRNB4 (IC(50)=3.6-18.38 nM), alpha-6/alpha-3-beta-4 (CHRNA6/CHRNA3-CHRNB4) (IC(50)=33.9-94.1 nM), and alpha-2-beta-4/CHRNA2-CHRNB4 (IC(50)=4550 nM) nAChRs. The toxin competes with agonists in the orthosteric binding site of alpha-3-beta-4/CHRNA3-CHRNB4 and alpha-6-beta-4/CHRNA6-CHRNB4. The protein is Alpha-conotoxin TxID of Conus textile (Cloth-of-gold cone).